The following is an 87-amino-acid chain: UPF0335 protein Meso_3367 (87 aa).

Belongs to the UPF0335 family.

The protein is UPF0335 protein Meso_3367 of Chelativorans sp. (strain BNC1).